The following is a 509-amino-acid chain: Cytochrome P450 98A2 (509 aa).

A helical transmembrane segment spans residues 2-21; it reads ALLLIIPISLVTLWLGYTLY. Heme is bound at residue cysteine 439.

Belongs to the cytochrome P450 family. Heme serves as cofactor.

The protein resides in the membrane. The chain is Cytochrome P450 98A2 (CYP98A2) from Glycine max (Soybean).